Here is a 465-residue protein sequence, read N- to C-terminus: Poly(A) polymerase I (465 aa).

Residues Asp-80, Asp-82, and Asp-162 contribute to the active site. Residues 430-465 form a disordered region; it reads APPEQKGMLNELDDDPAPRRRRSRPRKRAPRREGTV. Positions 448-459 are enriched in basic residues; sequence RRRRSRPRKRAP.

Belongs to the tRNA nucleotidyltransferase/poly(A) polymerase family.

It catalyses the reaction RNA(n) + ATP = RNA(n)-3'-adenine ribonucleotide + diphosphate. In terms of biological role, adds poly(A) tail to the 3' end of many RNAs, which usually targets these RNAs for decay. Plays a significant role in the global control of gene expression, through influencing the rate of transcript degradation, and in the general RNA quality control. The chain is Poly(A) polymerase I from Salmonella typhimurium (strain LT2 / SGSC1412 / ATCC 700720).